The primary structure comprises 255 residues: Syntaxin-6 (255 aa).

Ser2 carries the post-translational modification N-acetylserine. The residue at position 2 (Ser2) is a Phosphoserine. The segment at 2-168 is required for interaction with VPS51; sequence SMEDPFFVVK…QAQQQLIVEQ (167 aa). At 2 to 234 the chain is on the cytoplasmic side; it reads SMEDPFFVVK…VSHMTSDRRQ (233 aa). Positions 41–74 form a coiled coil; that stretch reads EEIDWTTNELRNNLRSIEWDLEDLDETISIVEAN. Phosphoserine is present on residues Ser129 and Ser152. The t-SNARE coiled-coil homology domain occupies 163–225; that stretch reads QLIVEQQDEQ…DNVMKKLAKV (63 aa). A helical; Anchor for type IV membrane protein transmembrane segment spans residues 235-255; that stretch reads WCAIAILFAVLVVVLILFLVL.

This sequence belongs to the syntaxin family. Identified in a complex containing STX6, STX12 and VAMP4. This complex also includes VTI1A. Binds EEA1. Interacts with VPS45A and GOPC. Interacts with MARCHF2; the interaction promotes MARCHF2-mediated ubiquitination and degradation of CFTR. Interacts with MARCHF3. Interacts with BLTP3B (via C-terminal coiled-coil domain). Interacts with BAIAP3; this interaction is increased in the presence of calcium. Interacts with VPS13B.

The protein resides in the golgi apparatus membrane. It localises to the golgi apparatus. It is found in the trans-Golgi network membrane. The protein localises to the recycling endosome membrane. SNARE promoting movement of transport vesicles to target membranes. Targets endosomes to the trans-Golgi network, and may therefore function in retrograde trafficking. Together with SNARE STX12, promotes movement of vesicles from endosomes to the cell membrane, and may therefore function in the endocytic recycling pathway. In Mus musculus (Mouse), this protein is Syntaxin-6 (Stx6).